A 57-amino-acid polypeptide reads, in one-letter code: UPF0337 protein SAV_1088 (57 aa).

2 stretches are compositionally biased toward basic and acidic residues: residues 1–15 (MAGD…EQAK) and 36–57 (QAEK…VFKH). Residues 1 to 57 (MAGDQKAKAKMEQAKGKAKAAAGRAVGNERMAAEGQAEKSKGDARQAKEKTKDVFKH) form a disordered region.

Belongs to the UPF0337 (CsbD) family.

This chain is UPF0337 protein SAV_1088, found in Streptomyces avermitilis (strain ATCC 31267 / DSM 46492 / JCM 5070 / NBRC 14893 / NCIMB 12804 / NRRL 8165 / MA-4680).